Here is a 20-residue protein sequence, read N- to C-terminus: SNPNFILTLVNNVPYTIWPA.

It is found in the secreted. It localises to the cell wall. This chain is 23 kDa cell wall protein, found in Solanum lycopersicum (Tomato).